Consider the following 492-residue polypeptide: NADH-quinone oxidoreductase subunit N (492 aa).

Transmembrane regions (helical) follow at residues 12 to 32 (LLPY…MIAI), 44 to 64 (ISVV…AGII), 76 to 96 (LFVI…CALA), 115 to 135 (LYLL…AQHL), 138 to 158 (FFMS…YTYM), 169 to 189 (YLVL…FIYA), 212 to 232 (LILG…AAPF), 244 to 264 (PAPI…ALAV), 272 to 292 (LLAL…SILL), 306 to 326 (LLGY…VSIG), 334 to 354 (SMYM…VTLM), 381 to 401 (TAVM…AGFI), 416 to 438 (WFLA…RVLL), and 463 to 483 (IMVI…NSMI).

The protein belongs to the complex I subunit 2 family. As to quaternary structure, NDH-1 is composed of 14 different subunits. Subunits NuoA, H, J, K, L, M, N constitute the membrane sector of the complex.

The protein resides in the cell inner membrane. It catalyses the reaction a quinone + NADH + 5 H(+)(in) = a quinol + NAD(+) + 4 H(+)(out). Its function is as follows. NDH-1 shuttles electrons from NADH, via FMN and iron-sulfur (Fe-S) centers, to quinones in the respiratory chain. The immediate electron acceptor for the enzyme in this species is believed to be ubiquinone. Couples the redox reaction to proton translocation (for every two electrons transferred, four hydrogen ions are translocated across the cytoplasmic membrane), and thus conserves the redox energy in a proton gradient. The sequence is that of NADH-quinone oxidoreductase subunit N from Psychrobacter arcticus (strain DSM 17307 / VKM B-2377 / 273-4).